The sequence spans 390 residues: MLGLKGCLTILIGYVIAVCALFSSRGRNPSLTDWEKLKDQKISNIDNFGLTGQHLLAFFQENLPFLSFSEEKYRHKHVSLYYDVFKEYILRRASSKKCLPVDSAIAKLNKDVNPMPVHSHNDYWRKLPLFEGLAYGASSTEADVWNIDEKILAVGHNEAYLDPVELTLDKLYTGPLLEILDEVNCQDSDSDRKNGVFFNSPETSLFFYIDFKSDDNELTYKLLMEQYFKSLIDSGYLTYYDMKKDEIIWRPVTVILTGNYPTSLDILDNGNDNGYFESSQRFAFLDAPLLSLEPKYSKLSVAATVSFSQLMKHCGSDHWKVSLRGRMDSNEISCAKSIIDGAHALKLKTRIWGAPTWPANLVETISRQIIHDLGSDLLNLDNLFMASSLI.

An N-terminal signal peptide occupies residues 1 to 26 (MLGLKGCLTILIGYVIAVCALFSSRG).

This sequence belongs to the AIM6 family.

This is Altered inheritance of mitochondria protein 6 (AIM6) from Saccharomyces cerevisiae (strain RM11-1a) (Baker's yeast).